The primary structure comprises 85 residues: MKTFVLALCLVLIGMVYAKDGYLVSKHTGCKLGCSPKIGDRYCHIECTSMNHKGDEGYCYWLACYCKGMPENAEVYPLPNKSCGK.

A signal peptide spans 1-18 (MKTFVLALCLVLIGMVYA). The LCN-type CS-alpha/beta domain occupies 19–84 (KDGYLVSKHT…VYPLPNKSCG (66 aa)). Cystine bridges form between Cys-30–Cys-83, Cys-34–Cys-59, Cys-43–Cys-64, and Cys-47–Cys-66. Position 83 is a cysteine amide (Cys-83).

This sequence belongs to the long (4 C-C) scorpion toxin superfamily. Sodium channel inhibitor family. Beta subfamily. In terms of tissue distribution, expressed by the venom gland.

Its subcellular location is the secreted. In terms of biological role, beta toxins bind voltage-independently at site-4 of sodium channels (Nav) and shift the voltage of activation toward more negative potentials thereby affecting sodium channel activation and promoting spontaneous and repetitive firing. This Centruroides tecomanus (Scorpion) protein is Beta-toxin Ct6.